Reading from the N-terminus, the 448-residue chain is tRNA modification GTPase MnmE (448 aa).

Arg-24, Glu-81, and Lys-120 together coordinate (6S)-5-formyl-5,6,7,8-tetrahydrofolate. One can recognise a TrmE-type G domain in the interval 216–373 (GLNVVLVGAP…LKRTLLREAG (158 aa)). Residue Asn-226 participates in K(+) binding. Residues 226-231 (NVGKSS), 245-251 (TDIAGTT), and 270-273 (DTAG) each bind GTP. Residue Ser-230 coordinates Mg(2+). K(+) is bound by residues Thr-245, Ile-247, and Thr-250. Thr-251 lines the Mg(2+) pocket. Lys-448 contributes to the (6S)-5-formyl-5,6,7,8-tetrahydrofolate binding site.

This sequence belongs to the TRAFAC class TrmE-Era-EngA-EngB-Septin-like GTPase superfamily. TrmE GTPase family. In terms of assembly, homodimer. Heterotetramer of two MnmE and two MnmG subunits. It depends on K(+) as a cofactor.

The protein resides in the cytoplasm. Exhibits a very high intrinsic GTPase hydrolysis rate. Involved in the addition of a carboxymethylaminomethyl (cmnm) group at the wobble position (U34) of certain tRNAs, forming tRNA-cmnm(5)s(2)U34. This Neisseria meningitidis serogroup C (strain 053442) protein is tRNA modification GTPase MnmE.